We begin with the raw amino-acid sequence, 164 residues long: MNRAAIYPGSFDPLTNGHLAIIQRGLNLFDRLVVAVANNPQKSPMFTVDERKALIREAVGNDPRVEVDSFDGLMVDYARTRGIPKVLRGLRAVSDFEYEFQLANMNKKLLPEFESVFVMTGEDYFFVSARLVREVAVFGGNVEGLVPPNVLEALQRKLGRPPRT.

Residue S10 coordinates substrate. ATP-binding positions include S10–F11 and H18. Positions 42, 74, and 88 each coordinate substrate. ATP is bound by residues G89–R91, E99, and Y124–R130.

The protein belongs to the bacterial CoaD family. Homohexamer. Mg(2+) is required as a cofactor.

It localises to the cytoplasm. The enzyme catalyses (R)-4'-phosphopantetheine + ATP + H(+) = 3'-dephospho-CoA + diphosphate. Its pathway is cofactor biosynthesis; coenzyme A biosynthesis; CoA from (R)-pantothenate: step 4/5. Reversibly transfers an adenylyl group from ATP to 4'-phosphopantetheine, yielding dephospho-CoA (dPCoA) and pyrophosphate. In Anaeromyxobacter dehalogenans (strain 2CP-C), this protein is Phosphopantetheine adenylyltransferase.